The primary structure comprises 976 residues: LRR receptor-like serine/threonine-protein kinase ERECTA (976 aa).

An N-terminal signal peptide occupies residues 1–24 (MALFRDIVLLGFLFCLSLVATVTS). The Extracellular portion of the chain corresponds to 25-580 (EEGATLLEIK…RRTVRVSISR (556 aa)). Residues N65 and N74 are each glycosylated (N-linked (GlcNAc...) asparagine). 20 LRR repeats span residues 69–92 (NVVA…GDLK), 93–115 (SLLS…IGDC), 117–140 (SLQN…SKLK), 141–163 (QLEQ…LSQI), 165–187 (NLKI…IYWN), 189–212 (VLQY…CQLT), 213–235 (GLWY…IGNC), 237–259 (AFQV…IGFL), 260–282 (QVAT…IGLM), 284–306 (ALAV…LGNL), 308–330 (FTEK…LGNM), 332–355 (KLHY…GKLT), 356–379 (DLFD…SSCT), 380–401 (NLNS…AFQK), 404–425 (SMTY…ELSR), 428–449 (NLDT…SLGD), 452–473 (HLLK…DFGN), 476–498 (SIME…LNQL), 500–522 (NIIL…ANCL), and 523–545 (SLTV…NNFS). N-linked (GlcNAc...) asparagine glycosylation is found at N221 and N234. 2 N-linked (GlcNAc...) asparagine glycosylation sites follow: N305 and N329. Residue N409 is glycosylated (N-linked (GlcNAc...) asparagine). N-linked (GlcNAc...) asparagine glycosylation is present at N457. N-linked (GlcNAc...) asparagine glycosylation is found at N510, N528, and N543. Residues 581 to 601 (AAILGIAIGGLVILLMVLIAA) form a helical membrane-spanning segment. The Cytoplasmic portion of the chain corresponds to 602 to 976 (CRPHNPPPFL…FGQVISQNSE (375 aa)). At T645 the chain carries Phosphothreonine. Residues 648-918 (LSEKYIIGHG…QVTRVLGSFM (271 aa)) enclose the Protein kinase domain. ATP contacts are provided by residues 654–662 (IGHGASSTV) and K676. Phosphotyrosine is present on residues Y721 and Y760. Catalysis depends on D773, which acts as the Proton acceptor. Position 815 is a phosphotyrosine (Y815). The residue at position 823 (T823) is a Phosphothreonine.

It belongs to the protein kinase superfamily. Ser/Thr protein kinase family. As to quaternary structure, homodimer and heterodimer with ERL1 and TMM. Interacts with EPF1, EPF2, EPFL4, EPFL5 and EPFL6. Interacts with SERK1, SERK2, SERK3/BAK1 and SERK4 in a EPF2-induced manner. Interacts with EPFL9/STOMAGEN. In terms of tissue distribution, mostly expressed in shoot apical meristems (SAM), organ primordia, flowers, siliques and young rosette leaves, and, to a lower extent, in stems and cauline leaves. Expressed in growing inflorescence stems and pedicels. Detected in epidermis, phloem and xylem.

Its subcellular location is the cell membrane. It carries out the reaction L-seryl-[protein] + ATP = O-phospho-L-seryl-[protein] + ADP + H(+). The enzyme catalyses L-threonyl-[protein] + ATP = O-phospho-L-threonyl-[protein] + ADP + H(+). Its function is as follows. Receptor kinase that, together with ERL1 and ERL2, regulates aerial architecture, including inflorescence (e.g. shoot apical meristem-originating organ shape, elongation of the internode and pedicels, and adaxial-abaxial polarity), and stomatal patterning (e.g. density and clustering), probably by tuning cell division and expansion. Redundantly involved with ERL1 in procambial development regulation. Forms a functional ligand-receptor pair with EPF2 (AC Q8LC53). Modulates plant transpiration efficiency by controlling stomatal density, leaf photosynthetic capacity, epidermal cell expansion, mesophyll cell proliferation and cell-cell contact. A phloem-specific expression of ER is sufficient for proper inflorescence architecture. Probable major trait regulating canalization (maintenance of phenotype despite varying environment) in many aspect of the plant physiology (e.g. plant morphology, light-dependent leaves number, branch number, flowering time, phytate and mineral concentrations) by transducing microenvironmental variation into phenotypic differentiation (ecological amplifier). May maintain development integrity in heat stress conditions. Regulates cell wall composition and structure. Confers resistance to the pathogenic bacteria Ralstonia solanacearum and to the necrotrophic fungi Plectosphaerella cucumerina and Pythium irregulare, and required for callose deposition upon infection. Resistance to P.cucumerina seems cell wall-mediated. Forms a constitutive complex with TMM involved in the recognition of the stomatal regulatory peptides EPF1, EPF2 and EPFL9/STOMAGEN. In Arabidopsis thaliana (Mouse-ear cress), this protein is LRR receptor-like serine/threonine-protein kinase ERECTA.